Here is a 1989-residue protein sequence, read N- to C-terminus: Exophilin-5 (1989 aa).

Residues 7 to 63 (AFDFSFLNDEEARKILQVLERNEELQRAEKDRISKLQKTKRDIRWLQGVTGEWFEEI) enclose the RabBD domain. Disordered stretches follow at residues 93-117 (NDPIELPTSRSKNVTNQKKPTPFSS) and 348-391 (TQSK…FLRA). 2 stretches are compositionally biased toward polar residues: residues 100-111 (TSRSKNVTNQKK) and 359-376 (HQQSPKRTPLSSIIWNRS). The span at 377–389 (DSSRDRENQEEFL) shows a compositional bias: basic and acidic residues. S603 bears the Phosphoserine mark. 3 disordered regions span residues 631–651 (FSQISDDRRNPQSPNLQNPTV), 806–827 (STASLPFIQEHRTPPSFPRTDQ), and 882–933 (AALP…NQKN). Over residues 641 to 651 (PQSPNLQNPTV) the composition is skewed to polar residues. Phosphoserine occurs at positions 806 and 809. Polar residues predominate over residues 891 to 909 (KNSSLDAPVVPSTTVFSRR). Residues 910–927 (SPSDKDPSLGEREEKDNA) are compositionally biased toward basic and acidic residues. 2 positions are modified to phosphoserine: S1028 and S1086. Disordered stretches follow at residues 1094–1113 (EATERMTNVKSSGSTSVRKG), 1124–1152 (SCPSGEPHASTGREGRKKPLTSGMDASEL), and 1365–1493 (EIFS…TNCQ). A compositionally biased stretch (polar residues) spans 1098–1110 (RMTNVKSSGSTSV). S1124 is modified (phosphoserine). Residues 1379–1390 (SENKKERGKKLQ) are compositionally biased toward basic and acidic residues. Over residues 1416 to 1431 (SINSSNSGPSSLPALS) the composition is skewed to low complexity. Over residues 1434-1447 (NIGNSQTRRSSWEC) the composition is skewed to polar residues. Phosphoserine is present on S1505. 2 disordered regions span residues 1521 to 1590 (EETQ…NRSS) and 1644 to 1737 (PEPT…PITF). 3 stretches are compositionally biased toward basic and acidic residues: residues 1551–1560 (ESRKAEDEMQ), 1573–1589 (NKNKTNLDDLVKGENRS), and 1658–1670 (RLSENGKHVKKSE). A compositionally biased stretch (polar residues) spans 1685-1709 (THVSNQKSNSISQRHQNEFKNVSES). A phosphoserine mark is found at S1753, S1768, S1821, and S1851. Residues 1921–1989 (FLKDDLRNPP…LDENDKESEL (69 aa)) are disordered. Over residues 1933–1943 (SESLSSNSPSS) the composition is skewed to low complexity. The segment covering 1959-1989 (YEDDPVDSDCDTDTTTDDEYYLDENDKESEL) has biased composition (acidic residues).

Interacts with RAB27A. In terms of tissue distribution, expressed in keratinocytes.

Its function is as follows. May act as Rab effector protein and play a role in vesicle trafficking. This Homo sapiens (Human) protein is Exophilin-5.